The primary structure comprises 967 residues: Zinc finger protein with KRAB and SCAN domains 2 (967 aa).

Lysine 22 is covalently cross-linked (Glycyl lysine isopeptide (Lys-Gly) (interchain with G-Cter in SUMO2)). Positions 45-127 (RKCFRQFCYE…ALVVHLEKET (83 aa)) constitute an SCAN box domain. Positions 150–205 (WEVADFQPEQVETQPRAVSREEPGSLHSGHQEQLNRKRERRPLPKNARPSPWVPAL) are disordered. The segment covering 167–185 (VSREEPGSLHSGHQEQLNR) has biased composition (basic and acidic residues). Positions 229–300 (VKDVHVARGF…GLHSSNKRSI (72 aa)) constitute a KRAB domain. Residues lysine 242, lysine 259, lysine 277, lysine 337, lysine 482, and lysine 529 each participate in a glycyl lysine isopeptide (Lys-Gly) (interchain with G-Cter in SUMO2) cross-link. Residues 586 to 602 (RASAPSPSTPEEVPSPS) are compositionally biased toward low complexity. Residues 586–626 (RASAPSPSTPEEVPSPSRQERGGIEVEPQEPTGWEPEETSQ) form a disordered region. Phosphoserine is present on residues serine 591 and serine 600. Residues lysine 734, lysine 745, and lysine 752 each participate in a glycyl lysine isopeptide (Lys-Gly) (interchain with G-Cter in SUMO2) cross-link. 6 consecutive C2H2-type zinc fingers follow at residues 775–797 (YKCG…QRIH), 803–825 (FKCL…QRIH), 831–853 (YRCG…QRTH), 859–881 (YQCG…RRVH), 887–909 (YKCV…RRIH), and 915–937 (YGCA…REVH). Residues 941-967 (KPLPHPPSLYCPENPHKGKTDEFRKTF) form a disordered region. The span at 954-967 (NPHKGKTDEFRKTF) shows a compositional bias: basic and acidic residues.

This sequence belongs to the krueppel C2H2-type zinc-finger protein family.

Its subcellular location is the nucleus. Functionally, may be involved in transcriptional regulation. The sequence is that of Zinc finger protein with KRAB and SCAN domains 2 (ZKSCAN2) from Homo sapiens (Human).